A 130-amino-acid polypeptide reads, in one-letter code: Aspartate 1-decarboxylase (130 aa).

Ser25 (schiff-base intermediate with substrate; via pyruvic acid) is an active-site residue. Ser25 bears the Pyruvic acid (Ser) mark. Thr57 serves as a coordination point for substrate. Tyr58 acts as the Proton donor in catalysis. Residue 73-75 (GAA) coordinates substrate.

This sequence belongs to the PanD family. Heterooctamer of four alpha and four beta subunits. The cofactor is pyruvate. Post-translationally, is synthesized initially as an inactive proenzyme, which is activated by self-cleavage at a specific serine bond to produce a beta-subunit with a hydroxyl group at its C-terminus and an alpha-subunit with a pyruvoyl group at its N-terminus.

It localises to the cytoplasm. The enzyme catalyses L-aspartate + H(+) = beta-alanine + CO2. The protein operates within cofactor biosynthesis; (R)-pantothenate biosynthesis; beta-alanine from L-aspartate: step 1/1. Catalyzes the pyruvoyl-dependent decarboxylation of aspartate to produce beta-alanine. The sequence is that of Aspartate 1-decarboxylase from Myxococcus xanthus (strain DK1622).